A 308-amino-acid chain; its full sequence is Aspartate carbamoyltransferase catalytic subunit (308 aa).

Residues Arg-55 and Thr-56 each contribute to the carbamoyl phosphate site. Lys-83 lines the L-aspartate pocket. Carbamoyl phosphate contacts are provided by Arg-105, His-133, and Gln-136. The L-aspartate site is built by Arg-166 and Arg-220. Residues Gly-261 and Pro-262 each contribute to the carbamoyl phosphate site.

Belongs to the aspartate/ornithine carbamoyltransferase superfamily. ATCase family. Heterododecamer (2C3:3R2) of six catalytic PyrB chains organized as two trimers (C3), and six regulatory PyrI chains organized as three dimers (R2).

The enzyme catalyses carbamoyl phosphate + L-aspartate = N-carbamoyl-L-aspartate + phosphate + H(+). The protein operates within pyrimidine metabolism; UMP biosynthesis via de novo pathway; (S)-dihydroorotate from bicarbonate: step 2/3. Its function is as follows. Catalyzes the condensation of carbamoyl phosphate and aspartate to form carbamoyl aspartate and inorganic phosphate, the committed step in the de novo pyrimidine nucleotide biosynthesis pathway. In Chlorobaculum parvum (strain DSM 263 / NCIMB 8327) (Chlorobium vibrioforme subsp. thiosulfatophilum), this protein is Aspartate carbamoyltransferase catalytic subunit.